A 315-amino-acid polypeptide reads, in one-letter code: Olfactory receptor 2V1 (315 aa).

Helical transmembrane passes span Thr-31–Tyr-51, Pro-59–Val-79, Ile-100–Ala-120, Ile-145–Met-165, Phe-196–Val-216, Leu-239–Ile-259, and Lys-273–Leu-293. Residues Cys-98 and Cys-180 are joined by a disulfide bond.

Belongs to the G-protein coupled receptor 1 family.

It localises to the cell membrane. Odorant receptor. Activated by (+) and (-)-limonene. This chain is Olfactory receptor 2V1, found in Mus musculus (Mouse).